The sequence spans 197 residues: MPAIDLSTIDLRAIKPSDLDWRKFTLDTGHPMRRIFIWSVAVNMGIGQSGERLEKAAKVMSELTGRTPSYRLAHKSIKDFGIRRGEPIGLLVTLRRNEAVWFLLRALAAVDFTLREESFNAGNVSFGIREHILVPGSRYDPALGIFGFDVAVTLARPGFRVQYRRRARADVGKDHRVSREETIRFFQDVLGVRILKR.

The protein belongs to the universal ribosomal protein uL5 family. Part of the 50S ribosomal subunit; contacts the 5S rRNA and probably tRNA. Forms a bridge to the 30S subunit in the 70S ribosome.

Functionally, this is one of the proteins that bind and probably mediate the attachment of the 5S RNA into the large ribosomal subunit, where it forms part of the central protuberance. In the 70S ribosome it contacts protein S13 of the 30S subunit (bridge B1b), connecting the 2 subunits; this bridge is implicated in subunit movement. May contact the P site tRNA; the 5S rRNA and some of its associated proteins might help stabilize positioning of ribosome-bound tRNAs. The polypeptide is Large ribosomal subunit protein uL5 (Caldivirga maquilingensis (strain ATCC 700844 / DSM 13496 / JCM 10307 / IC-167)).